An 845-amino-acid chain; its full sequence is MIMDALRHYGLSQQRTELTSAIQLPLRNTRRIKFTCFDVSEKYIIFGANSGSLYVYDRESVNFLSIIPSQLGTISQVQISSNGKQIAVANMRGAIGVVLDLDGSASKEVLLTELGGGEAAGGVGVVGRSGTTAFVTSFCWGEDDKELYCGDSKGTVSLLQLSMFMGRNILNMTLSPVLLLENHIVQIDRYKELLLVSTLSKCVLCNTQREEFKQIGNRPRDGLYGATFIVPNPEYFNTPTEEDLEDAKSMEGSDDNDNDQRSSPSGVKIAQDQVRIFCSRPGSRLWEADIDGNVLRTHQFRHRSTDREANGPCNEIIAFKLLQKVLGRLILVHDDREIFLIDPIASQVVLWINNVGDISRVRLVGEDIYVFGNDQTMMKLRLDVEQKEVPKRLPKKINGKKSSPFKENGVYILDHLFNNNGLKEGTLQTESTIKEALASVVRGKYGRNIKQMFLGYDQMGPERPKTLNISKVYNSEESYNNMVQVLPTDESSYAEDDCSEDVVPKRNPPKKMFSMSLLSDYQLSEDDKTVRNLYLVYRSSIISNLNFADRYAKIFDAYDTESIVSLLHKLEIVMDENNEEQSRLKCIKIYFDYLKVELIWEIDVESRAFIKQCFIEYNKMLLHEELCELEKCESCGHYLRTNINCHYPEIGTTLIQYYWSRKDYAHCFELVQQIPFLWHTITKFYIQDNREDKAIQCIWNVGDPGLLERAACEMFTMDHWRQLLDLMLTCYNSNSLMCLNCDKLCTLADPGRNPMWREQQNQAQSPVVNPKDNNHINNNNIGITTRGSTNVNRFYSWNYILNTAIDQKCVDGKSMLKLLRGYDEYIPKGAISTSFYLKCLLNVSD.

Residues 239–268 form a disordered region; sequence PTEEDLEDAKSMEGSDDNDNDQRSSPSGVK.

Belongs to the HPS5 family.

Has a role in the biogenesis of eye pigment granules. Eye pigment granules are specialized forms of late endosomes or lysosomes. Biogenesis of pigment granules in the eye requires molecular components required for protein delivery to lysosomes. The polypeptide is BLOC-2 complex member HPS5 homolog (Aedes aegypti (Yellowfever mosquito)).